The primary structure comprises 250 residues: Small ribosomal subunit protein uS3 (250 aa).

Residues Ile39 to Lys111 form the KH type-2 domain.

The protein belongs to the universal ribosomal protein uS3 family. Part of the 30S ribosomal subunit. Forms a tight complex with proteins S10 and S14.

Its function is as follows. Binds the lower part of the 30S subunit head. Binds mRNA in the 70S ribosome, positioning it for translation. This is Small ribosomal subunit protein uS3 from Alder yellows phytoplasma.